The primary structure comprises 261 residues: Cathepsin G (261 aa).

The signal sequence occupies residues Met-1 to Ala-18. Residues Gly-19–Lys-20 constitute a propeptide, activation peptide. The tract at residues Ile-21–Arg-25 is important for antimicrobial activity. Residues Ile-21–Arg-243 form the Peptidase S1 domain. An intrachain disulfide couples Cys-49 to Cys-65. His-64 (charge relay system) is an active-site residue. The N-linked (GlcNAc...) asparagine glycan is linked to Asn-71. Positions His-97–Leu-111 are important for antimicrobial activity. The active-site Charge relay system is Asp-108. Cystine bridges form between Cys-142-Cys-207 and Cys-172-Cys-186. Ser-201 (charge relay system) is an active-site residue.

Belongs to the peptidase S1 family. In terms of tissue distribution, in adult, detected only in bone marrow where expression is restricted to a small population of early myeloid cells.

It is found in the cell membrane. Its subcellular location is the cytoplasmic granule. The protein resides in the secreted. It localises to the cytoplasm. The protein localises to the cytosol. It is found in the lysosome. Its subcellular location is the nucleus. The enzyme catalyses Specificity similar to chymotrypsin C.. Its activity is regulated as follows. Inhibited by chymostatin, phenylmethanesulfonyl fluoride and diisopropyl fluorophosphate. Its function is as follows. Serine protease with trypsin- and chymotrypsin-like specificity. Also displays antibacterial activity against Gram-negative and Gram-positive bacteria independent of its protease activity. Prefers Phe and Tyr residues in the P1 position of substrates but also cleaves efficiently after Trp and Leu. Shows a preference for negatively charged amino acids in the P2' position and for aliphatic amino acids both upstream and downstream of the cleavage site. Required for recruitment and activation of platelets which is mediated by the F2RL3/PAR4 platelet receptor. Binds reversibly to and stimulates B cells and CD4(+) and CD8(+) T cells. Also binds reversibly to natural killer (NK) cells and enhances NK cell cytotoxicity through its protease activity. Cleaves complement C3. Cleaves vimentin. Cleaves thrombin receptor F2R/PAR1. Cleaves the synovial mucin-type protein PRG4/lubricin. Cleaves and activates IL36G which promotes expression of chemokines CXCL1 and CXLC8 in keratinocytes. Cleaves IL33 into mature forms which have greater activity than the unprocessed form. Cleaves coagulation factor F8 to produce a partially activated form. Also cleaves and activates coagulation factor F10. Cleaves leukocyte cell surface protein SPN/CD43 to release its extracellular domain and trigger its intramembrane proteolysis by gamma-secretase, releasing the CD43 cytoplasmic tail chain (CD43-ct) which translocates to the nucleus. During apoptosis, cleaves SMARCA2/BRM to produce a 160 kDa cleavage product which localizes to the cytosol. Cleaves MBP in B cell lysosomes at '221-Phe-|-Lys-222', degrading the major immunogenic MBP epitope and preventing the activation of MBP-specific autoreactive T cells. Cleaves annexin ANXA1 and antimicrobial peptide CAMP to produce peptides which act on neutrophil N-formyl peptide receptors to enhance the release of CXCL2. Acts as a ligand for the N-formyl peptide receptor FPR1, enhancing phagocyte chemotaxis. Has antibacterial activity against the Gram-negative bacteria N.gonorrhoeae and P.aeruginosa. Likely to act against N.gonorrhoeae by interacting with N.gonorrhoeae penA/PBP2. Exhibits potent antimicrobial activity against the Gram-positive bacterium L.monocytogenes. Has antibacterial activity against the Gram-positive bacterium S.aureus and degrades S.aureus biofilms, allowing polymorphonuclear leukocytes to penetrate the biofilm and phagocytose bacteria. Has antibacterial activity against M.tuberculosis. Induces platelet aggregation which is strongly potentiated in the presence of ELANE. This chain is Cathepsin G (Ctsg), found in Mus musculus (Mouse).